The sequence spans 254 residues: Alcohol dehydrogenase (254 aa).

Residue 10-33 coordinates NAD(+); sequence FVAGLGGIGLDTSKGIVKAGPKNL. Serine 138 provides a ligand contact to substrate. Tyrosine 151 (proton acceptor) is an active-site residue.

Belongs to the short-chain dehydrogenases/reductases (SDR) family. Homodimer.

It carries out the reaction a primary alcohol + NAD(+) = an aldehyde + NADH + H(+). The catalysed reaction is a secondary alcohol + NAD(+) = a ketone + NADH + H(+). The chain is Alcohol dehydrogenase (Adh) from Drosophila immigrans (Fruit fly).